A 397-amino-acid chain; its full sequence is Mannonate dehydratase (397 aa).

The protein belongs to the mannonate dehydratase family. Fe(2+) serves as cofactor. The cofactor is Mn(2+).

It catalyses the reaction D-mannonate = 2-dehydro-3-deoxy-D-gluconate + H2O. Its pathway is carbohydrate metabolism; pentose and glucuronate interconversion. Catalyzes the dehydration of D-mannonate. In Yersinia pestis bv. Antiqua (strain Angola), this protein is Mannonate dehydratase.